A 946-amino-acid polypeptide reads, in one-letter code: Serine/arginine repetitive matrix protein 1 (946 aa).

Met-1 is modified (N-acetylmethionine). Residues 1–151 (MDAGFFRGTS…ASLKKQDEDK (151 aa)) are necessary for DNA and RNA-binding. The segment at 1 to 156 (MDAGFFRGTS…QDEDKDKRDK (156 aa)) is necessary for mRNA 3'-end cleavage and cytoplasmic accumulation. The residue at position 7 (Arg-7) is a Citrulline. Positions 27 to 126 (QLKFAECLEK…AGIPSAFLEL (100 aa)) constitute a PWI domain. A Glycyl lysine isopeptide (Lys-Gly) (interchain with G-Cter in SUMO2) cross-link involves residue Lys-127. An N6-acetyllysine modification is found at Lys-140. Positions 142 to 170 (ASLKKQDEDKDKRDKEEKESSREKRERSR) are enriched in basic and acidic residues. The segment at 142–946 (ASLKKQDEDK…MRKAQVSPQS (805 aa)) is disordered. The segment covering 171 to 207 (SPRRRKSRSPSPRRRSSPVRRERKRSHSRSPRHRTKS) has biased composition (basic residues). Basic and acidic residues predominate over residues 214–234 (PEKKEKSPELPEPSVRMKDSS). A phosphoserine mark is found at Ser-220 and Ser-227. Residue Lys-231 forms a Glycyl lysine isopeptide (Lys-Gly) (interchain with G-Cter in SUMO1); alternate linkage. Lys-231 participates in a covalent cross-link: Glycyl lysine isopeptide (Lys-Gly) (interchain with G-Cter in SUMO2); alternate. Phosphoserine occurs at positions 234 and 240. Thr-241 carries the phosphothreonine modification. Residues 246 to 273 (KAPKPEPVPEPKEPSPEKNSKKEKEKTR) are compositionally biased toward basic and acidic residues. Lys-249 participates in a covalent cross-link: Glycyl lysine isopeptide (Lys-Gly) (interchain with G-Cter in SUMO2). Residue Ser-260 is modified to Phosphoserine. 2 stretches are compositionally biased toward basic residues: residues 274 to 327 (PRSR…RTPP) and 334 to 349 (PRHRRSRSPGRRRRRS). Residues 298–707 (RRHRSRSRSY…NKRHSPSPRP (410 aa)) form a necessary for speckles and matrix localization region. Positions 350-366 (SASLSGSSSSSSSSRSR) are enriched in low complexity. Phosphoserine is present on residues Ser-387, Ser-389, Ser-391, and Ser-400. Thr-404 bears the Phosphothreonine mark. The residue at position 412 (Ser-412) is a Phosphoserine. The residue at position 414 (Thr-414) is a Phosphothreonine. Phosphoserine occurs at positions 418, 427, 429, and 434. Residues 426 to 436 (VSVSPGRTSGK) show a composition bias toward polar residues. Residue Lys-445 forms a Glycyl lysine isopeptide (Lys-Gly) (interchain with G-Cter in SUMO2) linkage. 2 positions are modified to phosphoserine: Ser-448 and Ser-450. A Glycyl lysine isopeptide (Lys-Gly) (interchain with G-Cter in SUMO2) cross-link involves residue Lys-457. Residues Ser-461 and Ser-463 each carry the phosphoserine modification. Lys-470 participates in a covalent cross-link: Glycyl lysine isopeptide (Lys-Gly) (interchain with G-Cter in SUMO2). Ser-476 bears the Phosphoserine mark. Low complexity predominate over residues 476-499 (SVQQRRQYRRQNQQSSSDSGSSST). Over residues 501 to 516 (EDERPKRSHVKNGEVG) the composition is skewed to basic and acidic residues. 9 positions are modified to phosphoserine: Ser-522, Ser-524, Ser-526, Ser-528, Ser-530, Ser-561, Ser-563, Ser-572, and Ser-574. Residues 555–572 (SSRRRRSPSPPPARRRRS) are compositionally biased toward basic residues. Over residues 574–585 (SPAPPPPPPPPP) the composition is skewed to pro residues. Residues 586–611 (PRRRRSPTPPPRRRTPSPPPRRRSPS) are compositionally biased toward basic residues. Phosphothreonine is present on residues Thr-593 and Thr-600. Residue Ser-602 is modified to Phosphoserine. Over residues 612 to 624 (PRRYSPPIQRRYS) the composition is skewed to low complexity. Tyr-615 carries the phosphotyrosine modification. Residues Ser-616, Ser-624, and Ser-626 each carry the phosphoserine modification. Thr-633 is modified (phosphothreonine). Phosphoserine is present on residues Ser-635, Ser-645, Ser-647, Ser-655, and Ser-657. Basic residues predominate over residues 640-655 (PKRRASPSPPPKRRVS). A compositionally biased stretch (basic residues) spans 668–682 (TKRRSPSLSSKHRKG). The segment covering 704 to 718 (SPRPRAPQTSSPPPV) has biased composition (pro residues). 6 positions are modified to phosphoserine: Ser-713, Ser-714, Ser-723, Ser-725, Ser-731, and Ser-733. Positions 724 to 736 (ASPQGRQSPSPST) are enriched in polar residues. The residue at position 736 (Thr-736) is a Phosphothreonine. Ser-779, Ser-781, Ser-789, Ser-793, Ser-795, Ser-797, Ser-810, Ser-814, Ser-816, and Ser-818 each carry phosphoserine. Over residues 779 to 800 (SPSPQSVRRVSSSRSVSGSPEP) the composition is skewed to low complexity. Thr-819 is subject to Phosphothreonine. Residues Ser-822 and Ser-832 each carry the phosphoserine modification. The segment covering 833–842 (PTPSLSPARN) has biased composition (polar residues). Position 834 is a phosphothreonine (Thr-834). Phosphoserine is present on residues Ser-836, Ser-838, and Ser-843. Residues 850 to 875 (KKKKKKKDKKHKKDKKHKKHKKHKKE) are compositionally biased toward basic residues. Residues 878-907 (VTIATPATAAPAAVSAATTTSAQEEPAAAP) show a composition bias toward low complexity. Thr-913 bears the Phosphothreonine mark. A Phosphoserine modification is found at Ser-915. A compositionally biased stretch (basic and acidic residues) spans 924–934 (DLERHLREKAL). Position 943 is a phosphoserine (Ser-943).

The protein belongs to the splicing factor SR family. As to quaternary structure, identified in the spliceosome C complex. Found in a pre-mRNA splicing complex with SFRS4, SFRS5, SNRP70, SNRPA1, SRRM1 and SRRM2. Component of the minor spliceosome, which splices U12-type introns. Found in a pre-mRNA exonic splicing enhancer (ESE) complex with SNRP70, SNRPA1, SRRM1 and TRA2B/SFRS10. Found in a mRNA splicing-dependent exon junction complex (EJC) with DEK, PRPF8, NCBP1, RBM8A, RNPS1, SRRM1 and ALYREF/THOC4. Interacts with DDX39B, CPSF1, RBM8A, RNPS1, and ALYREF/THOC4. Seems to be a compound of RNA export complexes that are released from speckles in a ATP-dependent manner. In terms of processing, citrullinated by PADI4. Post-translationally, phosphorylated on multiple serine and threonine residues by DYRK3 during the G2-to-M transition, after the nuclear-envelope breakdown. Phosphorylation by DYRK3 promotes disassembly of nuclear speckles.

It localises to the nucleus matrix. It is found in the nucleus speckle. Functionally, part of pre- and post-splicing multiprotein mRNP complexes. As a component of the minor spliceosome, involved in the splicing of U12-type introns in pre-mRNAs. Involved in numerous pre-mRNA processing events. Promotes constitutive and exonic splicing enhancer (ESE)-dependent splicing activation by bridging together sequence-specific (SR family proteins, SFRS4, SFRS5 and TRA2B/SFRS10) and basal snRNP (SNRP70 and SNRPA1) factors of the spliceosome. Stimulates mRNA 3'-end cleavage independently of the formation of an exon junction complex. Binds both pre-mRNA and spliced mRNA 20-25 nt upstream of exon-exon junctions. Binds RNA and DNA with low sequence specificity and has similar preference for either double- or single-stranded nucleic acid substrates. The sequence is that of Serine/arginine repetitive matrix protein 1 (Srrm1) from Mus musculus (Mouse).